We begin with the raw amino-acid sequence, 216 residues long: Probable nicotinate-nucleotide adenylyltransferase (216 aa).

The protein belongs to the NadD family.

It catalyses the reaction nicotinate beta-D-ribonucleotide + ATP + H(+) = deamido-NAD(+) + diphosphate. It functions in the pathway cofactor biosynthesis; NAD(+) biosynthesis; deamido-NAD(+) from nicotinate D-ribonucleotide: step 1/1. In terms of biological role, catalyzes the reversible adenylation of nicotinate mononucleotide (NaMN) to nicotinic acid adenine dinucleotide (NaAD). This Geotalea daltonii (strain DSM 22248 / JCM 15807 / FRC-32) (Geobacter daltonii) protein is Probable nicotinate-nucleotide adenylyltransferase.